The chain runs to 136 residues: Ribosome-binding factor A (136 aa).

Positions 114–136 are disordered; the sequence is DRANRPGPAADEPDEPDEPEDRR. The span at 124-136 shows a compositional bias: acidic residues; that stretch reads DEPDEPDEPEDRR.

The protein belongs to the RbfA family. As to quaternary structure, monomer. Binds 30S ribosomal subunits, but not 50S ribosomal subunits or 70S ribosomes.

It is found in the cytoplasm. One of several proteins that assist in the late maturation steps of the functional core of the 30S ribosomal subunit. Associates with free 30S ribosomal subunits (but not with 30S subunits that are part of 70S ribosomes or polysomes). Required for efficient processing of 16S rRNA. May interact with the 5'-terminal helix region of 16S rRNA. The sequence is that of Ribosome-binding factor A from Bordetella petrii (strain ATCC BAA-461 / DSM 12804 / CCUG 43448).